Reading from the N-terminus, the 89-residue chain is Elongation factor 1-beta (89 aa).

The protein belongs to the EF-1-beta/EF-1-delta family.

Functionally, promotes the exchange of GDP for GTP in EF-1-alpha/GDP, thus allowing the regeneration of EF-1-alpha/GTP that could then be used to form the ternary complex EF-1-alpha/GTP/AAtRNA. The polypeptide is Elongation factor 1-beta (Methanococcus maripaludis (strain C5 / ATCC BAA-1333)).